We begin with the raw amino-acid sequence, 304 residues long: HTH-type transcriptional regulator AdmX (304 aa).

Residues 1–58 (MKLRHLEIFYTVMTCGSLSRAAESLNISQPAASKSLKNAELKLGFKLFQRVRGKLLPS) form the HTH lysR-type domain. The H-T-H motif DNA-binding region spans 18–37 (LSRAAESLNISQPAASKSLK).

The protein belongs to the LysR transcriptional regulatory family.

The protein resides in the cytoplasm. AdmX-mediated transcription is inhibited by indole-3-acetic and indole-3-pyruvic acids. AdmX recognizes and binds the auxin indole-3-acetic acid (IAA), which causes conformational changes in AdmX that result in the inhibition of the expression of the andrimid gene cluster and the suppression of antibiotic production. It also recognizes indole-3-pyruvic acid (IPA), an intermediate of the main IAA biosynthetic pathway in plants and plant beneficial bacteria, which also prevents andrimid synthesis, but to a much lesser extent. Functionally, positively regulates the biosynthesis of andrimid, a broad-spectrum antibiotic, by activating the expression of the adm biosynthetic gene cluster. It specifically binds to a region within the adm promoter. This is HTH-type transcriptional regulator AdmX from Serratia plymuthica.